Here is a 122-residue protein sequence, read N- to C-terminus: MVQSVSAIRRVSRLRRHARLRKKVSGTSERPRLVVNRSARHIHVQLVNDVTGTTVAAASSIEADVRGLQGDKKVRSVRVGQLIAERAKAAGINTVVFDRGGYTYGGRIAALADSVRENGLNF.

It belongs to the universal ribosomal protein uL18 family. Part of the 50S ribosomal subunit; part of the 5S rRNA/L5/L18/L25 subcomplex. Contacts the 5S and 23S rRNAs.

This is one of the proteins that bind and probably mediate the attachment of the 5S RNA into the large ribosomal subunit, where it forms part of the central protuberance. The sequence is that of Large ribosomal subunit protein uL18 from Mycobacterium leprae (strain TN).